The chain runs to 746 residues: SNF-related serine/threonine-protein kinase (746 aa).

One can recognise a Protein kinase domain in the interval 16-269; that stretch reads YDLDKTLGRG…LEEIESHPWL (254 aa). ATP contacts are provided by residues 22–30 and Lys-45; that span reads LGRGHFAVV. Asp-139 (proton acceptor) is an active-site residue. The residue at position 162 (Ser-162) is a Phosphoserine. Thr-173 is subject to Phosphothreonine; by LKB1. One can recognise a UBA domain in the interval 291–334; the sequence is SEEEHNSIIQRMVLGDIADRDAIVEALETNRYNHITATYFLLAE. Phosphoserine occurs at positions 362, 390, 482, 495, and 518. Residues 383–414 form a disordered region; the sequence is SHATVPQSPARAGDSVLNGHRSKGLCDPAKKD. The segment covering 494 to 503 has biased composition (acidic residues); sequence ESDDEFDMDE. Residues 494 to 638 are disordered; the sequence is ESDDEFDMDE…SSSSSPASAA (145 aa). The segment covering 522-532 has biased composition (basic residues); sequence VHKRYHRRKSQ. Low complexity predominate over residues 533–542; it reads GRGSSCSSSE. Omega-N-methylarginine is present on Arg-534. The segment covering 549–558 has biased composition (basic and acidic residues); that stretch reads ESRRRLDKDS. Gly residues-rich tracts occupy residues 575-592 and 600-614; these read GSEGDGGGQSKPSGGGGV and QGTGGSGQGGSGGTP. Residues 615-638 show a composition bias toward low complexity; that stretch reads SGTAGSSRRCAGPDSSSSSPASAA.

The protein belongs to the protein kinase superfamily. CAMK Ser/Thr protein kinase family. The cofactor is Mg(2+). In terms of processing, autophosphorylated. Phosphorylation on Thr-173 by STK11/LKB1 in complex with STE20-related adapter-alpha (STRADA) pseudo kinase and CAB39. Ubiquitously expressed in all tissues examined with highest levels in the brain and testis. Strongly expressed in the pyramidal and granule neurons of the hippocampus and also in the cerebellum.

Its subcellular location is the nucleus. The catalysed reaction is L-seryl-[protein] + ATP = O-phospho-L-seryl-[protein] + ADP + H(+). It carries out the reaction L-threonyl-[protein] + ATP = O-phospho-L-threonyl-[protein] + ADP + H(+). Activated by phosphorylation on Thr-173. Functionally, may play a role in hematopoietic cell proliferation or differentiation. Potential mediator of neuronal apoptosis. This Rattus norvegicus (Rat) protein is SNF-related serine/threonine-protein kinase.